A 300-amino-acid polypeptide reads, in one-letter code: uncharacterized protein (300 aa).

Tyr-53 serves as the catalytic Proton donor. 210–220 (SPLAGGKVFTE) is a binding site for NADP(+).

Belongs to the aldo/keto reductase family. Aldo/keto reductase 2 subfamily.

This is an uncharacterized protein from Bacillus subtilis (strain 168).